Reading from the N-terminus, the 283-residue chain is GTP cyclohydrolase MptA (283 aa).

Belongs to the GTP cyclohydrolase IV family. As to quaternary structure, homodimer. Requires Fe(2+) as cofactor.

It catalyses the reaction GTP + H2O = 7,8-dihydroneopterin 2',3'-cyclic phosphate + formate + diphosphate + H(+). Its pathway is cofactor biosynthesis; 5,6,7,8-tetrahydromethanopterin biosynthesis. Converts GTP to 7,8-dihydro-D-neopterin 2',3'-cyclic phosphate, the first intermediate in the biosynthesis of coenzyme methanopterin. This Aeropyrum pernix (strain ATCC 700893 / DSM 11879 / JCM 9820 / NBRC 100138 / K1) protein is GTP cyclohydrolase MptA.